The chain runs to 214 residues: Probable DNA (cytosine-5)-methyltransferase (214 aa).

Cys-62 is an active-site residue.

The protein belongs to the class I-like SAM-binding methyltransferase superfamily. C5-methyltransferase family. In terms of assembly, probably requires another subunit for function.

The enzyme catalyses a 2'-deoxycytidine in DNA + S-adenosyl-L-methionine = a 5-methyl-2'-deoxycytidine in DNA + S-adenosyl-L-homocysteine + H(+). Its function is as follows. This is probably the methylase that recognizes and modifies 5'-CpG-3'. This is Probable DNA (cytosine-5)-methyltransferase from Dryophytes versicolor (chameleon treefrog).